The chain runs to 299 residues: Protease HtpX homolog (299 aa).

The next 2 helical transmembrane spans lie at 14 to 34 and 39 to 59; these read IVLLIVFFMLLAAIGAAVGYL and LVGGMAIALIIGFIYAFSMIF. H143 lines the Zn(2+) pocket. E144 is an active-site residue. Residue H147 coordinates Zn(2+). The next 2 membrane-spanning stretches (helical) occupy residues 158–178 and 198–218; these read IAVALASAVTLISSIGGRMMW and IILLIFSLLAIILAPLAASLV. Residue E227 coordinates Zn(2+).

Belongs to the peptidase M48B family. Zn(2+) is required as a cofactor.

It is found in the cell membrane. In Streptococcus mutans serotype c (strain ATCC 700610 / UA159), this protein is Protease HtpX homolog.